A 55-amino-acid chain; its full sequence is Large ribosomal subunit protein bL33 (55 aa).

The protein belongs to the bacterial ribosomal protein bL33 family.

The chain is Large ribosomal subunit protein bL33 from Acidothermus cellulolyticus (strain ATCC 43068 / DSM 8971 / 11B).